A 229-amino-acid polypeptide reads, in one-letter code: Biosynthetic peptidoglycan transglycosylase (229 aa).

Residues 11–31 (NLLLALFLVLVAGPVVAVILY) traverse the membrane as a helical segment.

The protein belongs to the glycosyltransferase 51 family.

Its subcellular location is the cell inner membrane. The enzyme catalyses [GlcNAc-(1-&gt;4)-Mur2Ac(oyl-L-Ala-gamma-D-Glu-L-Lys-D-Ala-D-Ala)](n)-di-trans,octa-cis-undecaprenyl diphosphate + beta-D-GlcNAc-(1-&gt;4)-Mur2Ac(oyl-L-Ala-gamma-D-Glu-L-Lys-D-Ala-D-Ala)-di-trans,octa-cis-undecaprenyl diphosphate = [GlcNAc-(1-&gt;4)-Mur2Ac(oyl-L-Ala-gamma-D-Glu-L-Lys-D-Ala-D-Ala)](n+1)-di-trans,octa-cis-undecaprenyl diphosphate + di-trans,octa-cis-undecaprenyl diphosphate + H(+). The protein operates within cell wall biogenesis; peptidoglycan biosynthesis. In terms of biological role, peptidoglycan polymerase that catalyzes glycan chain elongation from lipid-linked precursors. The sequence is that of Biosynthetic peptidoglycan transglycosylase from Caulobacter vibrioides (strain ATCC 19089 / CIP 103742 / CB 15) (Caulobacter crescentus).